A 540-amino-acid chain; its full sequence is GMP synthase [glutamine-hydrolyzing] (540 aa).

Positions Ile-26–Thr-216 constitute a Glutamine amidotransferase type-1 domain. The Nucleophile role is filled by Cys-103. Active-site residues include His-190 and Glu-192. A GMPS ATP-PPase domain is found at Trp-217–Arg-415. Residue Ser-244–Ser-250 participates in ATP binding.

Homodimer.

It catalyses the reaction XMP + L-glutamine + ATP + H2O = GMP + L-glutamate + AMP + diphosphate + 2 H(+). The protein operates within purine metabolism; GMP biosynthesis; GMP from XMP (L-Gln route): step 1/1. Catalyzes the synthesis of GMP from XMP. The sequence is that of GMP synthase [glutamine-hydrolyzing] from Nostoc sp. (strain PCC 7120 / SAG 25.82 / UTEX 2576).